The primary structure comprises 158 residues: S-ribosylhomocysteine lyase (158 aa).

3 residues coordinate Fe cation: histidine 54, histidine 58, and cysteine 124.

Belongs to the LuxS family. In terms of assembly, homodimer. Requires Fe cation as cofactor.

The enzyme catalyses S-(5-deoxy-D-ribos-5-yl)-L-homocysteine = (S)-4,5-dihydroxypentane-2,3-dione + L-homocysteine. In terms of biological role, involved in the synthesis of autoinducer 2 (AI-2) which is secreted by bacteria and is used to communicate both the cell density and the metabolic potential of the environment. The regulation of gene expression in response to changes in cell density is called quorum sensing. Catalyzes the transformation of S-ribosylhomocysteine (RHC) to homocysteine (HC) and 4,5-dihydroxy-2,3-pentadione (DPD). This is S-ribosylhomocysteine lyase from Limosilactobacillus reuteri (strain DSM 20016) (Lactobacillus reuteri).